Here is a 208-residue protein sequence, read N- to C-terminus: ATP phosphoribosyltransferase (208 aa).

It belongs to the ATP phosphoribosyltransferase family. Short subfamily. In terms of assembly, heteromultimer composed of HisG and HisZ subunits.

It localises to the cytoplasm. The catalysed reaction is 1-(5-phospho-beta-D-ribosyl)-ATP + diphosphate = 5-phospho-alpha-D-ribose 1-diphosphate + ATP. Its pathway is amino-acid biosynthesis; L-histidine biosynthesis; L-histidine from 5-phospho-alpha-D-ribose 1-diphosphate: step 1/9. Its function is as follows. Catalyzes the condensation of ATP and 5-phosphoribose 1-diphosphate to form N'-(5'-phosphoribosyl)-ATP (PR-ATP). Has a crucial role in the pathway because the rate of histidine biosynthesis seems to be controlled primarily by regulation of HisG enzymatic activity. This chain is ATP phosphoribosyltransferase, found in Hydrogenovibrio crunogenus (strain DSM 25203 / XCL-2) (Thiomicrospira crunogena).